The primary structure comprises 706 residues: Sodium- and chloride-dependent glycine transporter 1 (706 aa).

Positions 1–26 (MSGGDTRAAIARPRMAAAHGPVAPSS) are disordered. Topologically, residues 1-108 (MSGGDTRAAI…KRGNWGNQIE (108 aa)) are cytoplasmic. Low complexity predominate over residues 7–18 (RAAIARPRMAAA). Helical transmembrane passes span 109–129 (FVLT…FPYL), 136–156 (GAFM…LFFM), and 188–208 (VSTY…YYFF). The Extracellular segment spans residues 209–285 (SSMTHVLPWA…LSDDIGNFGE (77 aa)). 9 helical membrane-spanning segments follow: residues 286–306 (VRLP…LCLI), 315–335 (VVYF…VRGV), 360–380 (VWGD…GGLI), 407–427 (SVYA…HLGV), 450–470 (LLPI…LLGL), 506–526 (VAGF…WLLL), 530–550 (YAAS…IMYI), 570–590 (LFFQ…ILVF), and 610–630 (VAIG…YAMF). At 631 to 706 (RLCRTDGDTL…GSSRLQDSRI (76 aa)) the chain is on the cytoplasmic side. A phosphoserine mark is found at S673 and S698. An essential for interaction with EXOC1 region spans residues 695–706 (SNGSSRLQDSRI).

This sequence belongs to the sodium:neurotransmitter symporter (SNF) (TC 2.A.22) family. SLC6A9 subfamily. In terms of assembly, interacts with EXOC1; interaction increases the transporter capacity of SLC6A9 probably by promoting its insertion into the cell membrane. Interacts with EXOC3 and EXOC4. In terms of tissue distribution, expressed in the brain, kidney, pancreas, lung, placenta and liver. As to expression, expressed only in the brain.

The protein resides in the cell membrane. It catalyses the reaction glycine(out) + chloride(out) + 2 Na(+)(out) = glycine(in) + chloride(in) + 2 Na(+)(in). Inhibited by sarcosine. In terms of biological role, sodium- and chloride-dependent glycine transporter. Essential for regulating glycine concentrations at inhibitory glycinergic synapses. Its function is as follows. Sodium- and chloride-dependent glycine transporter. The sequence is that of Sodium- and chloride-dependent glycine transporter 1 (SLC6A9) from Homo sapiens (Human).